Consider the following 498-residue polypeptide: Tyrosine 3-monooxygenase (498 aa).

Polar residues predominate over residues 1–10; it reads MPTPSASSPQ. The segment at 1–33 is disordered; sequence MPTPSASSPQPKGFRRAVSEQDTKQAEAVTSPR. Phosphoserine occurs at positions 19 and 31. Position 40 is a phosphoserine; by CaMK2 and PKA (Ser-40). Positions 331, 336, and 376 each coordinate Fe cation. Position 472 is a phosphoserine (Ser-472).

Belongs to the biopterin-dependent aromatic amino acid hydroxylase family. In terms of assembly, homotetramer. Interacts (when phosphorylated at Ser-19) with YWHAG; one YWHAG dimer bounds to one TH tetramer and this interaction may influence the phosphorylation and dephosphorylation of other sites. Interacts with NT5DC2; the interaction results in reduced phosphorylation and decreased catalytic activity of TH. Fe(2+) serves as cofactor. In terms of processing, phosphorylated on Ser-19, Ser-31 and Ser-40 by several protein kinases with different site specificities. Phosphorylation at Ser-31 and Ser-40 leads to an increase of TH activity. Phosphorylation at Ser-40 activates the enzyme and also counteracts the feedback inhibition of TH by catecholamines. Phosphorylation of Ser-19 and Ser-31 triggers the proteasomal degradation of TH through the ubiquitin-proteasome pathway. Phosphorylation at Ser-31 facilitates transport of TH from the soma to the nerve terminals via the microtubule network. Phosphorylation at Ser-19 induces the high-affinity binding to the 14-3-3 protein YWHAG; this interaction may influence the phosphorylation and dephosphorylation of other sites. Ser-19 increases the phosphorylation at Ser-40 in a hierarchical manner, leading to increased activity. In terms of tissue distribution, expressed in the adrenal gland. Expressed in the retina. Expressed in the in the striatum (at protein level).

The protein localises to the cytoplasm. It is found in the perinuclear region. Its subcellular location is the nucleus. The protein resides in the cell projection. It localises to the axon. The protein localises to the cytoplasmic vesicle. It is found in the secretory vesicle. Its subcellular location is the synaptic vesicle. It carries out the reaction (6R)-L-erythro-5,6,7,8-tetrahydrobiopterin + L-tyrosine + O2 = (4aS,6R)-4a-hydroxy-L-erythro-5,6,7,8-tetrahydrobiopterin + L-dopa. It functions in the pathway catecholamine biosynthesis; dopamine biosynthesis; dopamine from L-tyrosine: step 1/2. Inhibited in feedback fashion by the catecholamine neurotransmitters, especially by dopamine in competition with tetrahydrobiopterin. Phosphorylation of several Ser/Thr residues in the N-terminus regulates the catalytic activity. Ser-31 and Ser-40 are readily phosphorylated to activate the catalytic activity. A Cysteine modification induced by N-ethylmaleimide (NEM), inhibits tyrosine 3-monooxygenase activity through the modification of the Cys-177. Functionally, catalyzes the conversion of L-tyrosine to L-dihydroxyphenylalanine (L-Dopa), the rate-limiting step in the biosynthesis of catecholamines, dopamine, noradrenaline, and adrenaline. Uses tetrahydrobiopterin and molecular oxygen to convert tyrosine to L-Dopa. In addition to tyrosine, is able to catalyze the hydroxylation of phenylalanine and tryptophan with lower specificity. Positively regulates the regression of retinal hyaloid vessels during postnatal development. This is Tyrosine 3-monooxygenase (Th) from Mus musculus (Mouse).